An 886-amino-acid chain; its full sequence is Microsomal triglyceride transfer protein (886 aa).

Residues 1–24 (MLRLAGLLLCVTSFLSTSSLGANA) form the signal peptide. The Vitellogenin domain occupies 28–662 (LDNDRLYRYS…QSNNALLHGL (635 aa)). 2 disulfide bridges follow: cysteine 174–cysteine 194 and cysteine 440–cysteine 445.

As to quaternary structure, heterodimer; heterodimerizes with the protein disulfide isomerase. Interacts with apolipoprotein B.

The protein resides in the endoplasmic reticulum. Catalyzes the transport of triglyceride, cholesteryl ester, and phospholipid between phospholipid surfaces. Required for the secretion of plasma lipoproteins that contain apolipoprotein B. The polypeptide is Microsomal triglyceride transfer protein (Megalobrama amblycephala (Chinese blunt snout bream)).